The chain runs to 147 residues: UPF0306 protein YhbP (147 aa).

This sequence belongs to the UPF0306 family.

The sequence is that of UPF0306 protein YhbP from Escherichia coli O7:K1 (strain IAI39 / ExPEC).